Reading from the N-terminus, the 385-residue chain is Na(+)/H(+) antiporter NhaA (385 aa).

11 helical membrane-spanning segments follow: residues 9-29, 45-65, 87-107, 114-134, 155-175, 198-218, 220-235, 245-265, 282-302, 312-332, and 345-365; these read YSAIFLLCSAALAIIFANVLD, IFGLITPHDIVADFLLAVFFF, IIPGVCAAGGILVPISIYLSV, GWPVPTATDVAFSLGILAIFG, AGIVIIATAFSVSISYWWIIV, TFLIIPAMLLCALAAWVSVYQ, GIHATIAGVMLGIMLN, ALEPYINGIILPAFAFLAAMV, ILLGLLFGKLLGISVFGIIAL, FFNLLVVSALGGIGFTVSLLM, and QGVIAVLIGSLLSAILAIILM.

This sequence belongs to the NhaA Na(+)/H(+) (TC 2.A.33) antiporter family.

It localises to the cell membrane. It carries out the reaction Na(+)(in) + 2 H(+)(out) = Na(+)(out) + 2 H(+)(in). Its function is as follows. Na(+)/H(+) antiporter that extrudes sodium in exchange for external protons. In Tropheryma whipplei (strain Twist) (Whipple's bacillus), this protein is Na(+)/H(+) antiporter NhaA.